The primary structure comprises 369 residues: tRNA/tmRNA (uracil-C(5))-methyltransferase (369 aa).

S-adenosyl-L-methionine-binding residues include Gln190, Tyr218, Asn223, Glu239, and Asp301. Cys326 (nucleophile) is an active-site residue. Glu360 (proton acceptor) is an active-site residue.

The protein belongs to the class I-like SAM-binding methyltransferase superfamily. RNA M5U methyltransferase family. TrmA subfamily.

It catalyses the reaction uridine(54) in tRNA + S-adenosyl-L-methionine = 5-methyluridine(54) in tRNA + S-adenosyl-L-homocysteine + H(+). It carries out the reaction uridine(341) in tmRNA + S-adenosyl-L-methionine = 5-methyluridine(341) in tmRNA + S-adenosyl-L-homocysteine + H(+). Functionally, dual-specificity methyltransferase that catalyzes the formation of 5-methyluridine at position 54 (m5U54) in all tRNAs, and that of position 341 (m5U341) in tmRNA (transfer-mRNA). This is tRNA/tmRNA (uracil-C(5))-methyltransferase from Vibrio vulnificus (strain YJ016).